The primary structure comprises 76 residues: UPF0346 protein LBUL_1194 (76 aa).

Belongs to the UPF0346 family.

The polypeptide is UPF0346 protein LBUL_1194 (Lactobacillus delbrueckii subsp. bulgaricus (strain ATCC BAA-365 / Lb-18)).